Reading from the N-terminus, the 384-residue chain is MPPIAQEGNCLIYRGSNFLKQRLILACLSGKPVKISQIRSEDETAPGLREYEISLIRLLDKITNGTKIELNPAGTSVMFSPGLLHGGQLNHDCCVQRGIGYYLDALIALGPFCKSPLQCTLRGVTNSKDSPSVDHIKGAALSLLKRFLLVDEGLELKVVRRGVAPLGGGEIIFRCPVRKSLRAIQFQSQGMVKRIRGTVYACKVSPAMANRTVEAAKGCMLKFLPDVYIYTDQNKGKMSGNSPGFGICLIAETTDGVCFAADCCSNTREESEDTPSIPENLGKEVALRLLDEIYRGGCVDSSYQWLAALYIALGQKHVSKFLTGALSNYTVHFLQHLRDFFSITFKLENPEAEDEDEAENVRGAQKVLMACVGIGYTNINKRVI.

It belongs to the RNA 3'-terminal cyclase family. Type 2 subfamily. Part of the small subunit (SSU) processome, composed of more than 70 proteins and the RNA chaperone small nucleolar RNA (snoRNA) U3.

Its subcellular location is the nucleus. The protein resides in the nucleolus. Its function is as follows. Part of the small subunit (SSU) processome, first precursor of the small eukaryotic ribosomal subunit. During the assembly of the SSU processome in the nucleolus, many ribosome biogenesis factors, an RNA chaperone and ribosomal proteins associate with the nascent pre-rRNA and work in concert to generate RNA folding, modifications, rearrangements and cleavage as well as targeted degradation of pre-ribosomal RNA by the RNA exosome. Does not have cyclase activity. In Drosophila melanogaster (Fruit fly), this protein is Probable RNA 3'-terminal phosphate cyclase-like protein (Rtc1).